A 135-amino-acid chain; its full sequence is Galectin-1 (135 aa).

Ala-2 carries the post-translational modification N-acetylalanine. One can recognise a Galectin domain in the interval 4 to 135; that stretch reads GLVASNLNLK…DFKIKCVAFE (132 aa). Residues Lys-13 and Lys-29 each carry the N6-acetyllysine modification. Ser-30 bears the Phosphoserine mark. A beta-D-galactoside-binding positions include 45–49, His-53, Asn-62, and 69–72; these read HFNPR and WGAE. N6-acetyllysine; alternate is present on Lys-108. The residue at position 108 (Lys-108) is an N6-succinyllysine; alternate. Lys-128 bears the N6-acetyllysine mark.

In terms of assembly, homodimer. Binds LGALS3BP. Interacts with CD2, CD3, CD4, CD6, CD7, CD43, ALCAM and CD45. Interacts with laminin (via poly-N-acetyllactosamine). Interacts with SUSD2. Interacts with cargo receptor TMED10; the interaction mediates the translocation from the cytoplasm into the ERGIC (endoplasmic reticulum-Golgi intermediate compartment) and thereby secretion.

The protein localises to the secreted. Its subcellular location is the extracellular space. It localises to the extracellular matrix. It is found in the cytoplasm. Functionally, lectin that binds beta-galactoside and a wide array of complex carbohydrates. Plays a role in regulating apoptosis, cell proliferation and cell differentiation. Inhibits CD45 protein phosphatase activity and therefore the dephosphorylation of Lyn kinase. Strong inducer of T-cell apoptosis. The polypeptide is Galectin-1 (LGALS1) (Ovis aries (Sheep)).